The sequence spans 209 residues: Large ribosomal subunit protein uL4 (209 aa).

A disordered region spans residues 44 to 77 (QRQGTHKSKERSEVSGSTRKLIRQKGGGGARRGD).

It belongs to the universal ribosomal protein uL4 family. As to quaternary structure, part of the 50S ribosomal subunit.

Its function is as follows. One of the primary rRNA binding proteins, this protein initially binds near the 5'-end of the 23S rRNA. It is important during the early stages of 50S assembly. It makes multiple contacts with different domains of the 23S rRNA in the assembled 50S subunit and ribosome. Functionally, forms part of the polypeptide exit tunnel. In Parabacteroides distasonis (strain ATCC 8503 / DSM 20701 / CIP 104284 / JCM 5825 / NCTC 11152), this protein is Large ribosomal subunit protein uL4.